Reading from the N-terminus, the 241-residue chain is Proteasome subunit alpha (241 aa).

Belongs to the peptidase T1A family. In terms of assembly, the 20S proteasome core is composed of 14 alpha and 14 beta subunits that assemble into four stacked heptameric rings, resulting in a barrel-shaped structure. The two inner rings, each composed of seven catalytic beta subunits, are sandwiched by two outer rings, each composed of seven alpha subunits. The catalytic chamber with the active sites is on the inside of the barrel. Has a gated structure, the ends of the cylinder being occluded by the N-termini of the alpha-subunits. Is capped by the proteasome-associated ATPase, ARC.

Its subcellular location is the cytoplasm. The protein operates within protein degradation; proteasomal Pup-dependent pathway. With respect to regulation, the formation of the proteasomal ATPase ARC-20S proteasome complex, likely via the docking of the C-termini of ARC into the intersubunit pockets in the alpha-rings, may trigger opening of the gate for substrate entry. Interconversion between the open-gate and close-gate conformations leads to a dynamic regulation of the 20S proteasome proteolysis activity. Component of the proteasome core, a large protease complex with broad specificity involved in protein degradation. In Parafrankia sp. (strain EAN1pec), this protein is Proteasome subunit alpha.